The following is a 421-amino-acid chain: Adenylosuccinate synthetase (421 aa).

GTP-binding positions include 11–17 and 39–41; these read GDEGKGK and GHT. The active-site Proton acceptor is Asp-12. Mg(2+) is bound by residues Asp-12 and Gly-39. IMP-binding positions include 12–15, 37–40, Thr-124, Arg-138, Gln-220, Thr-235, and Arg-299; these read DEGK and NAGH. His-40 (proton donor) is an active-site residue. 295–301 lines the substrate pocket; the sequence is TTTGRPR. GTP is bound by residues Arg-301, 327–329, and 409–411; these read KLD and SVG.

The protein belongs to the adenylosuccinate synthetase family. As to quaternary structure, homodimer. Mg(2+) serves as cofactor.

It is found in the cytoplasm. The catalysed reaction is IMP + L-aspartate + GTP = N(6)-(1,2-dicarboxyethyl)-AMP + GDP + phosphate + 2 H(+). Its pathway is purine metabolism; AMP biosynthesis via de novo pathway; AMP from IMP: step 1/2. Its function is as follows. Plays an important role in the de novo pathway of purine nucleotide biosynthesis. Catalyzes the first committed step in the biosynthesis of AMP from IMP. In Methanothrix thermoacetophila (strain DSM 6194 / JCM 14653 / NBRC 101360 / PT) (Methanosaeta thermophila), this protein is Adenylosuccinate synthetase.